The chain runs to 384 residues: F-box A protein 224 (384 aa).

Positions 71–122 constitute an F-box domain; sequence PKSLSDFPIGVMYDVLGHVDPFERLVLRKVSRNLRDVVQKMRCELDALYVNK.

Belongs to the FTH family.

In Caenorhabditis elegans, this protein is F-box A protein 224 (fbxa-224).